Here is a 285-residue protein sequence, read N- to C-terminus: Diaminopimelate epimerase (285 aa).

Positions 11 and 62 each coordinate substrate. The Proton donor role is filled by Cys-71. Substrate-binding positions include 72 to 73, Asn-167, Asn-200, and 218 to 219; these read GN and ER. The Proton acceptor role is filled by Cys-227. Position 228 to 229 (228 to 229) interacts with substrate; sequence GT.

Belongs to the diaminopimelate epimerase family. As to quaternary structure, homodimer.

It localises to the cytoplasm. It carries out the reaction (2S,6S)-2,6-diaminopimelate = meso-2,6-diaminopimelate. It participates in amino-acid biosynthesis; L-lysine biosynthesis via DAP pathway; DL-2,6-diaminopimelate from LL-2,6-diaminopimelate: step 1/1. Functionally, catalyzes the stereoinversion of LL-2,6-diaminopimelate (L,L-DAP) to meso-diaminopimelate (meso-DAP), a precursor of L-lysine and an essential component of the bacterial peptidoglycan. In Agathobacter rectalis (strain ATCC 33656 / DSM 3377 / JCM 17463 / KCTC 5835 / VPI 0990) (Eubacterium rectale), this protein is Diaminopimelate epimerase.